A 101-amino-acid polypeptide reads, in one-letter code: Urease subunit beta (101 aa).

Belongs to the urease beta subunit family. In terms of assembly, heterotrimer of UreA (gamma), UreB (beta) and UreC (alpha) subunits. Three heterotrimers associate to form the active enzyme.

It is found in the cytoplasm. It carries out the reaction urea + 2 H2O + H(+) = hydrogencarbonate + 2 NH4(+). It functions in the pathway nitrogen metabolism; urea degradation; CO(2) and NH(3) from urea (urease route): step 1/1. The sequence is that of Urease subunit beta from Bradyrhizobium sp. (strain ORS 278).